Here is a 412-residue protein sequence, read N- to C-terminus: MAENLKGCSVCCKSSWNQLQDLCRLAKLSCPALGISKRNLYDFEVEYLCDYKKIREQEYYLVKWRGYPDSESTWEPRQNLKCVRILKQFHKDLERELLRRHHRSKTPRHLDPSLANYLVQKAKQRRALRRWEQELNAKRSHLGRITVENEVDLDGPPRAFVYINEYRVGEGITLNQVAVGCECQDCLWAPTGGCCPGASLHKFAYNDQGQVRLRAGLPIYECNSRCRCGYDCPNRVVQKGIRYDLCIFRTDDGRGWGVRTLEKIRKNSFVMEYVGEIITSEEAERRGQIYDRQGATYLFDLDYVEDVYTVDAAYYGNISHFVNHSCDPNLQVYNVFIDNLDERLPRIAFFATRTIRAGEELTFDYNMQVDPVDMESTRMDSNFGLAGLPGSPKKRVRIECKCGTESCRKYLF.

The tract at residues 1–89 is interaction with SIRT1; it reads MAENLKGCSV…LKCVRILKQF (89 aa). The region spanning 43–101 is the Chromo domain; sequence FEVEYLCDYKKIREQEYYLVKWRGYPDSESTWEPRQNLKCVRILKQFHKDLERELLRRH. In terms of domain architecture, Pre-SET spans 179–240; that stretch reads VGCECQDCLW…DCPNRVVQKG (62 aa). 9 residues coordinate Zn(2+): C181, C183, C186, C194, C195, C222, C226, C228, and C232. Residues 243–366 enclose the SET domain; sequence YDLCIFRTDD…AGEELTFDYN (124 aa). 254–256 lines the S-adenosyl-L-methionine pocket; it reads RGW. The mediates interaction with MECOM stretch occupies residues 255–377; that stretch reads GWGVRTLEKI…QVDPVDMEST (123 aa). K266 bears the N6-acetyllysine mark. S-adenosyl-L-methionine is bound by residues Y297 and 323 to 324; that span reads NH. C326 serves as a coordination point for Zn(2+). Position 391 is a phosphoserine (S391). Positions 396 to 412 constitute a Post-SET domain; sequence VRIECKCGTESCRKYLF. C400, C402, and C407 together coordinate Zn(2+).

The protein belongs to the class V-like SAM-binding methyltransferase superfamily. Histone-lysine methyltransferase family. Suvar3-9 subfamily. In terms of assembly, interacts with H3 and H4 histones. Interacts with GFI1B, DNMT3B, CBX1, CBX4, CCAR2, MBD1, RUNX1, RUNX3, MYOD1, SMAD5 and RB1. Interacts with SBF1 through the SET domain. Interacts with HDAC1 and HDAC2 through the N-terminus and associates with the core histone deacetylase complex composed of HDAC1, HDAC2, RBBP4 and RBBP7. Component of the eNoSC complex, composed of SIRT1, SUV39H1 and RRP8. Interacts (via SET domain) with MECOM; enhances MECOM transcriptional repression activity. Interacts with LMNA; the interaction increases stability of SUV39H1. The large PER complex involved in the histone methylation is composed of at least PER2, CBX3, TRIM28, SUV39H1 and/or SUV39H2; CBX3 mediates the formation of the complex. (Microbial infection) Interacts with HTLV-1 Tax protein, leading to abrogate Tax transactivation of HTLV-1 LTR. Phosphorylated on serine residues, and to a lesser degree, on threonine residues. The phosphorylated form is stabilized by SBF1 and is less active in its transcriptional repressor function. In terms of processing, ubiquitinated by the DCX(DCAF13) E3 ubiquitin ligase complex, leading to its degradation. Post-translationally, acetylated at Lys-266, leading to inhibition of enzyme activity. SIRT1-mediated deacetylation relieves this inhibition. (Microbial infection) A higher molecular weight form is also seen in M.bovis infected cells.

It is found in the nucleus. Its subcellular location is the nucleus lamina. It localises to the nucleoplasm. The protein localises to the chromosome. The protein resides in the centromere. It is found in the cytoplasmic vesicle. Its subcellular location is the phagosome lumen. It localises to the cell membrane. It catalyses the reaction L-lysyl(9)-[histone H3] + 3 S-adenosyl-L-methionine = N(6),N(6),N(6)-trimethyl-L-lysyl(9)-[histone H3] + 3 S-adenosyl-L-homocysteine + 3 H(+). Inhibited by S-adenosyl-L-homocysteine. Negatively regulated by CCAR2. Its function is as follows. Histone methyltransferase that specifically trimethylates 'Lys-9' of histone H3 using monomethylated H3 'Lys-9' as substrate. Also weakly methylates histone H1 (in vitro). H3 'Lys-9' trimethylation represents a specific tag for epigenetic transcriptional repression by recruiting HP1 (CBX1, CBX3 and/or CBX5) proteins to methylated histones. Mainly functions in heterochromatin regions, thereby playing a central role in the establishment of constitutive heterochromatin at pericentric and telomere regions. H3 'Lys-9' trimethylation is also required to direct DNA methylation at pericentric repeats. SUV39H1 is targeted to histone H3 via its interaction with RB1 and is involved in many processes, such as repression of MYOD1-stimulated differentiation, regulation of the control switch for exiting the cell cycle and entering differentiation, repression by the PML-RARA fusion protein, BMP-induced repression, repression of switch recombination to IgA and regulation of telomere length. Component of the eNoSC (energy-dependent nucleolar silencing) complex, a complex that mediates silencing of rDNA in response to intracellular energy status and acts by recruiting histone-modifying enzymes. The eNoSC complex is able to sense the energy status of cell: upon glucose starvation, elevation of NAD(+)/NADP(+) ratio activates SIRT1, leading to histone H3 deacetylation followed by dimethylation of H3 at 'Lys-9' (H3K9me2) by SUV39H1 and the formation of silent chromatin in the rDNA locus. Recruited by the large PER complex to the E-box elements of the circadian target genes such as PER2 itself or PER1, contributes to the conversion of local chromatin to a heterochromatin-like repressive state through H3 'Lys-9' trimethylation. In terms of biological role, (Microbial infection) Plays a role in defense against mycobacterial infections. Methylates M.tuberculosis HupB on 'Lys-140', probably methylates HupB of M.bovis also. Methylation has an inhibitory effect on mycobacterial growth in the host. Macrophages expressing about 60% SUV39H1 are slightly more susceptible to M.bovis or M.tuberculosis infection. Chaetocin (an inhibitor of this enzyme) increases macrophage survival of M.tuberculosis. This protein inhibits biofilm formation by M.tuberculosis via 'Lys-140' trimethylation. The protein is Histone-lysine N-methyltransferase SUV39H1 (SUV39H1) of Homo sapiens (Human).